Here is a 46-residue protein sequence, read N- to C-terminus: Photosystem II reaction center protein K (46 aa).

A propeptide spanning residues 1-9 (MLILFNTFA) is cleaved from the precursor. Residues 25-45 (LPLIPLFFFLLVFVWQAAVGF) form a helical membrane-spanning segment.

The protein belongs to the PsbK family. As to quaternary structure, PSII is composed of 1 copy each of membrane proteins PsbA, PsbB, PsbC, PsbD, PsbE, PsbF, PsbH, PsbI, PsbJ, PsbK, PsbL, PsbM, PsbT, PsbX, PsbY, Psb30/Ycf12, peripheral proteins PsbO, CyanoQ (PsbQ), PsbU, PsbV and a large number of cofactors. It forms dimeric complexes.

The protein resides in the cellular thylakoid membrane. Its function is as follows. One of the components of the core complex of photosystem II (PSII). PSII is a light-driven water:plastoquinone oxidoreductase that uses light energy to abstract electrons from H(2)O, generating O(2) and a proton gradient subsequently used for ATP formation. It consists of a core antenna complex that captures photons, and an electron transfer chain that converts photonic excitation into a charge separation. The polypeptide is Photosystem II reaction center protein K (Prochlorococcus marinus (strain MIT 9301)).